The following is a 509-amino-acid chain: Probable triacylglyceride transporter ML0556 (509 aa).

13 helical membrane-spanning segments follow: residues 48 to 68 (RITW…PLLS), 78 to 98 (LLLQ…ALAG), 112 to 132 (IQGV…ADLW), 146 to 166 (AAQE…VWLF), 171 to 191 (YVFW…QVSL), 203 to 223 (VDVV…IGLY), 232 to 252 (VLPS…VAFA), 272 to 292 (PFLS…VTLV), 309 to 329 (AAGL…LGGW), 339 to 359 (MTFV…HWPV), 381 to 403 (LLVA…LRVV), 410 to 430 (IASA…VAAL), and 477 to 497 (IFMI…LISS).

Belongs to the major facilitator superfamily.

The protein resides in the cell inner membrane. Its function is as follows. In association with lipoprotein LprG probably transports triacylglycerides (TAG) across the inner cell membrane into the periplasm; TAG probably regulates lipid metabolism and growth regulation. May be an efflux transporter and involved in maintaining correct cell wall permeability. Probably required with LprG for normal surface localization of lipoarabinomannan (LAM). This chain is Probable triacylglyceride transporter ML0556, found in Mycobacterium leprae (strain TN).